The sequence spans 500 residues: Zinc finger and BTB domain-containing protein 34 (500 aa).

A BTB domain is found at 32–96 (CDIIVHIQGQ…CYTGRMSLQL (65 aa)). At Ser164 the chain carries Phosphoserine. Residues 164 to 209 (SPPYCSQGRQPTASSDLRMETTPSKALRSRLQEEGHSDRGSSGSVS) are disordered. Residues 193 to 202 (RLQEEGHSDR) show a composition bias toward basic and acidic residues. Glycyl lysine isopeptide (Lys-Gly) (interchain with G-Cter in SUMO2) cross-links involve residues Lys235 and Lys237. Over residues 236–245 (VKMEKSDRPS) the composition is skewed to basic and acidic residues. Disordered stretches follow at residues 236–256 (VKME…GDDG) and 341–360 (SDSE…RERS). C2H2-type zinc fingers lie at residues 372–394 (LICI…MRLH) and 400–422 (FVCK…IRGH). Lys426 is covalently cross-linked (Glycyl lysine isopeptide (Lys-Gly) (interchain with G-Cter in SUMO2)). The C2H2-type 3 zinc finger occupies 428–451 (FRCEICGKCFPFQGTLNQHLRKNH). Phosphoserine is present on Ser463. Residue Lys474 forms a Glycyl lysine isopeptide (Lys-Gly) (interchain with G-Cter in SUMO2) linkage. Residues 478–500 (DASASEMGLDSRMEIHTVSDAPD) form a disordered region.

Expressed in several tissues, including heart, brain, thymus, skeletal muscle, small intestine, testis, kidney, placenta, peripheral blood cells and adult and fetal liver.

Its subcellular location is the nucleus. In terms of biological role, may be a transcriptional repressor. The protein is Zinc finger and BTB domain-containing protein 34 (ZBTB34) of Homo sapiens (Human).